We begin with the raw amino-acid sequence, 595 residues long: Chaperone protein HscA homolog (595 aa).

This sequence belongs to the heat shock protein 70 family.

Chaperone involved in the maturation of iron-sulfur cluster-containing proteins. Has a low intrinsic ATPase activity which is markedly stimulated by HscB. The protein is Chaperone protein HscA homolog of Rickettsia conorii (strain ATCC VR-613 / Malish 7).